A 102-amino-acid polypeptide reads, in one-letter code: Malonate decarboxylase acyl carrier protein (102 aa).

O-(phosphoribosyl dephospho-coenzyme A)serine is present on serine 27.

The protein belongs to the MdcC family. Post-translationally, covalently binds the prosthetic group of malonate decarboxylase.

The protein resides in the cytoplasm. Subunit of malonate decarboxylase, it is an acyl carrier protein to which acetyl and malonyl thioester residues are bound via a 2'-(5''-phosphoribosyl)-3'-dephospho-CoA prosthetic group and turn over during the catalytic mechanism. This chain is Malonate decarboxylase acyl carrier protein, found in Acinetobacter calcoaceticus.